Consider the following 307-residue polypeptide: Homoserine O-acetyltransferase (307 aa).

Cys142 (acyl-thioester intermediate) is an active-site residue. Substrate is bound by residues Lys163 and Ser192. His235 serves as the catalytic Proton acceptor. Residue Glu237 is part of the active site. A substrate-binding site is contributed by Arg249.

This sequence belongs to the MetA family.

The protein localises to the cytoplasm. It catalyses the reaction L-homoserine + acetyl-CoA = O-acetyl-L-homoserine + CoA. Its pathway is amino-acid biosynthesis; L-methionine biosynthesis via de novo pathway; O-acetyl-L-homoserine from L-homoserine: step 1/1. Its function is as follows. Transfers an acetyl group from acetyl-CoA to L-homoserine, forming acetyl-L-homoserine. The protein is Homoserine O-acetyltransferase of Desulfitobacterium hafniense (strain Y51).